A 506-amino-acid chain; its full sequence is MASPAKQKVVIVGAGPVGCLAALYAAARGDDVELYELRGDLRVPGTIPLNFTKSINLSLSHRGITALRHSGREHVINEILQEVVPIYGRMIHGRDDGKLWEAPQAYDVHGRNNYSADRGMLNNVFLNELERIPNIKLFFNHKLTGADFQANKAWFERRLPGEAPLPGSSGRVPEIEVDFDFLIGADGAHSATRYHMMKFARVDYQQEYIDTLWCEFRIPPSPTNDFLISPSHLHIWPGKEFMFIALPSVDKSFTCTLFAPASHYAQLERSTEDLLQFFDEHFPGVCPQLISPSDLTAQFRANPHLPLISIKCAPHHYSSSVVIVGDAAHAVLPFYGQGLNAGLEDIQVLFDALDKHGVYNANSDQAARALARQSAFAAYTASRTADAHAINDLSRQNYVEMRWGVKQPLYRLRKYIEEALYHYLPSLGWQTQYTRVSFSNQRYSEIIAINRRQGRILGAVFGSTLISVLAVTGIYLWRQPTTRLLSLASFRGALQGALQGALTGTA.

This sequence belongs to the aromatic-ring hydroxylase family. KMO subfamily. It depends on FAD as a cofactor.

The protein resides in the mitochondrion outer membrane. The catalysed reaction is L-kynurenine + NADPH + O2 + H(+) = 3-hydroxy-L-kynurenine + NADP(+) + H2O. It functions in the pathway cofactor biosynthesis; NAD(+) biosynthesis; quinolinate from L-kynurenine: step 1/3. Functionally, catalyzes the hydroxylation of L-kynurenine (L-Kyn) to form 3-hydroxy-L-kynurenine (L-3OHKyn). Required for synthesis of quinolinic acid. This chain is Kynurenine 3-monooxygenase (bna4), found in Emericella nidulans (strain FGSC A4 / ATCC 38163 / CBS 112.46 / NRRL 194 / M139) (Aspergillus nidulans).